Reading from the N-terminus, the 579-residue chain is DELLA protein RGA2 (579 aa).

The interval 1 to 31 (MKRDLHQFQGPPDTRFPNHGTANTGSSSKDK) is disordered. A DELLA motif motif is present at residues 45–49 (DELLA). 2 stretches are compositionally biased toward low complexity: residues 149–162 (SSSS…NSQS) and 174–183 (SLVTGTTVTT). Residues 149–183 (SSSSSNQAGDNSQSTKRLKSCSSPDSLVTGTTVTT) form a disordered region. Positions 205–574 (VDSQENGVRL…RPLITTSAWK (370 aa)) constitute a GRAS domain. The leucine repeat I (LRI) stretch occupies residues 212–266 (VRLVHALMACAEAIQNNDLSIAEALVKQIGFLAVSQAGAMRKVATYFAEALARRI). The segment at 285–350 (QMHFYETCPY…GGPPVFRLTG (66 aa)) is VHIID. The short motif at 316–320 (VHVID) is the VHIID element. The interval 364-396 (EVGCKLAQLAEAIHVEFEYRGFVANSLADLDAS) is leucine repeat II (LRII). The interval 408–495 (VAVNSVFELH…EVYLGKQICN (88 aa)) is PFYRE. Residues 416–420 (LHKLL) carry the LXXLL motif motif. Residues 498-574 (ACEGPDRVER…RPLITTSAWK (77 aa)) form an SAW region.

The protein belongs to the GRAS family. DELLA subfamily. In terms of processing, phosphorylated. Ubiquitinated. Upon GA application it is ubiquitinated, leading to its subsequent degradation.

It localises to the nucleus. Functionally, probable transcriptional regulator that acts as a repressor of the gibberellin (GA) signaling pathway. Probably acts by participating in large multiprotein complexes that represses transcription of GA-inducible genes. Upon GA application, it is degraded by the proteasome, allowing the GA signaling pathway. In Brassica campestris (Field mustard), this protein is DELLA protein RGA2 (RGA2).